Consider the following 58-residue polypeptide: Proteinase inhibitor PSKP-1 (58 aa).

A Kazal-like domain is found at 1 to 58; that stretch reads VIEPKCYKYEGKKCPPDINPVCGTDKRTYYNECALCVFIRQSTKKADKAIKIKKWGKC. 3 disulfides stabilise this stretch: cysteine 6/cysteine 36, cysteine 14/cysteine 33, and cysteine 22/cysteine 58.

Monomer. In terms of tissue distribution, skin.

It is found in the secreted. In terms of biological role, has antibacterial activity against Gram-negative bacterium E.coli ATCC 11229. Shows hemagglutinating activity. Inhibits prolyl endopeptidase, but not trypsin, chymotrypsin, V8 protease and proteinase K. May have a role in mucosal defense against microbes by interacting directly with their membranes. In Phyllomedusa sauvagei (Sauvage's leaf frog), this protein is Proteinase inhibitor PSKP-1.